The sequence spans 136 residues: uncharacterized protein (136 aa).

Helical transmembrane passes span 25-47 (ILKA…PHAF) and 78-97 (ITGA…LLTA).

Its subcellular location is the cell membrane. This is an uncharacterized protein from Bacillus subtilis (strain 168).